The sequence spans 184 residues: ATP synthase subunit delta (184 aa).

Belongs to the ATPase delta chain family. F-type ATPases have 2 components, F(1) - the catalytic core - and F(0) - the membrane proton channel. F(1) has five subunits: alpha(3), beta(3), gamma(1), delta(1), epsilon(1). F(0) has three main subunits: a(1), b(2) and c(10-14). The alpha and beta chains form an alternating ring which encloses part of the gamma chain. F(1) is attached to F(0) by a central stalk formed by the gamma and epsilon chains, while a peripheral stalk is formed by the delta and b chains.

Its subcellular location is the cell membrane. Its function is as follows. F(1)F(0) ATP synthase produces ATP from ADP in the presence of a proton or sodium gradient. F-type ATPases consist of two structural domains, F(1) containing the extramembraneous catalytic core and F(0) containing the membrane proton channel, linked together by a central stalk and a peripheral stalk. During catalysis, ATP synthesis in the catalytic domain of F(1) is coupled via a rotary mechanism of the central stalk subunits to proton translocation. This protein is part of the stalk that links CF(0) to CF(1). It either transmits conformational changes from CF(0) to CF(1) or is implicated in proton conduction. The chain is ATP synthase subunit delta from Bacillus licheniformis (strain ATCC 14580 / DSM 13 / JCM 2505 / CCUG 7422 / NBRC 12200 / NCIMB 9375 / NCTC 10341 / NRRL NRS-1264 / Gibson 46).